The chain runs to 305 residues: tRNA uridine(34) hydroxylase (305 aa).

Positions 125 to 219 constitute a Rhodanese domain; sequence ADENTVVVDT…YLEEVPREQS (95 aa). Catalysis depends on C179, which acts as the Cysteine persulfide intermediate.

The protein belongs to the TrhO family.

The enzyme catalyses uridine(34) in tRNA + AH2 + O2 = 5-hydroxyuridine(34) in tRNA + A + H2O. In terms of biological role, catalyzes oxygen-dependent 5-hydroxyuridine (ho5U) modification at position 34 in tRNAs. The chain is tRNA uridine(34) hydroxylase from Brucella ovis (strain ATCC 25840 / 63/290 / NCTC 10512).